Consider the following 181-residue polypeptide: uncharacterized protein (181 aa).

The signal sequence occupies residues 1-23; it reads MKKCLLFLTTIALILSLSTNAFA.

This is an uncharacterized protein from Bacillus subtilis (strain 168).